We begin with the raw amino-acid sequence, 175 residues long: ATP-dependent protease subunit HslV (175 aa).

Residue threonine 2 is part of the active site. Residues glycine 157, cysteine 160, and threonine 163 each contribute to the Na(+) site.

Belongs to the peptidase T1B family. HslV subfamily. As to quaternary structure, a double ring-shaped homohexamer of HslV is capped on each side by a ring-shaped HslU homohexamer. The assembly of the HslU/HslV complex is dependent on binding of ATP.

The protein localises to the cytoplasm. It catalyses the reaction ATP-dependent cleavage of peptide bonds with broad specificity.. With respect to regulation, allosterically activated by HslU binding. In terms of biological role, protease subunit of a proteasome-like degradation complex believed to be a general protein degrading machinery. This is ATP-dependent protease subunit HslV from Photobacterium profundum (strain SS9).